The following is a 239-amino-acid chain: Serine protease SplC (239 aa).

Residues 1 to 36 (MNKNIVIKSMAALAILTSVTGINAAVVEETQQIANA) form the signal peptide. Catalysis depends on charge relay system residues His75, Asp113, and Ser193.

The protein belongs to the peptidase S1B family.

It localises to the secreted. The polypeptide is Serine protease SplC (splC) (Staphylococcus aureus (strain MW2)).